A 163-amino-acid chain; its full sequence is ATP synthase subunit b 2 (163 aa).

A helical membrane pass occupies residues 5–25; it reads SLATLWATIALIIFLGVAIYI.

This sequence belongs to the ATPase B chain family. F-type ATPases have 2 components, F(1) - the catalytic core - and F(0) - the membrane proton channel. F(1) has five subunits: alpha(3), beta(3), gamma(1), delta(1), epsilon(1). F(0) has three main subunits: a(1), b(2) and c(10-14). The alpha and beta chains form an alternating ring which encloses part of the gamma chain. F(1) is attached to F(0) by a central stalk formed by the gamma and epsilon chains, while a peripheral stalk is formed by the delta and b chains.

It is found in the cell inner membrane. F(1)F(0) ATP synthase produces ATP from ADP in the presence of a proton or sodium gradient. F-type ATPases consist of two structural domains, F(1) containing the extramembraneous catalytic core and F(0) containing the membrane proton channel, linked together by a central stalk and a peripheral stalk. During catalysis, ATP synthesis in the catalytic domain of F(1) is coupled via a rotary mechanism of the central stalk subunits to proton translocation. In terms of biological role, component of the F(0) channel, it forms part of the peripheral stalk, linking F(1) to F(0). The polypeptide is ATP synthase subunit b 2 (Mesorhizobium japonicum (strain LMG 29417 / CECT 9101 / MAFF 303099) (Mesorhizobium loti (strain MAFF 303099))).